A 380-amino-acid chain; its full sequence is Cytochrome b (380 aa).

4 consecutive transmembrane segments (helical) span residues Phe-33–Met-53, Trp-77–Ile-98, Trp-113–Leu-133, and Phe-178–Leu-198. Positions 83 and 97 each coordinate heme b. Residues His-182 and His-196 each contribute to the heme b site. An a ubiquinone-binding site is contributed by His-201. 4 helical membrane-spanning segments follow: residues Tyr-226–Ser-246, Leu-288–His-308, Phe-320–Gly-340, and Tyr-347–Pro-367.

Belongs to the cytochrome b family. As to quaternary structure, the cytochrome bc1 complex contains 3 respiratory subunits (MT-CYB, CYC1 and UQCRFS1), 2 core proteins (UQCRC1 and UQCRC2) and probably 6 low-molecular weight proteins. Requires heme b as cofactor.

The protein localises to the mitochondrion inner membrane. Functionally, component of the ubiquinol-cytochrome c reductase complex (complex III or cytochrome b-c1 complex) that is part of the mitochondrial respiratory chain. The b-c1 complex mediates electron transfer from ubiquinol to cytochrome c. Contributes to the generation of a proton gradient across the mitochondrial membrane that is then used for ATP synthesis. The chain is Cytochrome b (mt-cyb) from Apogon semilineatus (Half-lined cardinal).